Here is a 1131-residue protein sequence, read N- to C-terminus: Protein TOPLESS (1131 aa).

The LisH domain maps to 4 to 36 (LSRELVFLILQFLDEEKFKETVHKLEQESGFFF). The region spanning 34 to 92 (FFFNMKYFEDEVHNGNWDEVEKYLSGFTKVDDNRYSMKIFFEIRKQKYLEALDKHDRPK) is the CTLH domain. Ser-214 carries the phosphoserine modification. Residues 286–305 (TPPTNASLDYPSADSEHVSK) form a disordered region. 15 WD repeats span residues 353–393 (SQGS…RLVQ), 415–454 (EPVV…DMRQ), 460–501 (AHVG…KRHT), 504–545 (GHEA…SRVD), 548–591 (APGR…VKRT), 595–634 (FHKR…LLTA), 639–678 (GGLQ…RLLH), 710–756 (DRSA…EPSQ), 766–805 (LRVA…RNAT), 833–871 (NPEE…TMAT), 874–914 (PPPP…VKSK), 917–956 (GHSK…KQRS), 967–1005 (NSAP…CMKQ), 1010–1049 (ESLA…LRCR), and 1060–1102 (LSNS…GKWG). The interval 1100–1131 (KWGVAPPAENGSASGAPTAPSVGASASDQPQR) is disordered.

In terms of assembly, tetramer. Homodimer. Interacts (via the LisH domain) with WUS (via the C-terminal domain). Interacts with NINJA/AFPH2. Interacts with IAA1; IAA2; IAA3; IAA4; IAA6; IAA8; IAA9; IAA11; IAA13; IAA14; IAA17; IAA18; IAA26; IAA27 and IAA28. Interacts (via the LisH domain) with IAA12/BDL (via domain I). Can form a complex with IAA12 and ARF5. Interacts with AP2 (via EAR motif) and HDA19. Interacts with TIFY5A/JAZ8 (via EAR motif). Interacts with SPEAR3/TIE1. Interacts with SPL (via EAR motif). Interacts with ZAT2 and ZAT3 (via the EAR motif). Interacts with JAZ13 (via EAR motif). Interacts with GIR1 and GIR2. Expressed in embryo and in extraembryonic tissues. Expressed in inflorescences, flowers, floral meristems, developing anthers and ovules. Detected in the vascular tissues, shoot apical meristem, cotyledons and young leaves. Expressed ubiquitously in the pistils, stamens and pollens.

Its subcellular location is the nucleus. In terms of biological role, transcriptional corepressor. May repress the expression of root-promoting genes in the top half of the embryo to allow proper differentiation of the shoot pole during the transition stage of embryogenesis. Regulates the expression of PLT1 and PLT2. Negative regulator of jasmonate responses. Negative regulator of auxin responses. Negative regulator of multiple floral organ identity genes. Required for ovule development. The polypeptide is Protein TOPLESS (TPL) (Arabidopsis thaliana (Mouse-ear cress)).